The primary structure comprises 383 residues: Carbamoyl phosphate synthase small chain (383 aa).

The CPSase stretch occupies residues 1–190 (MPHPSSRQAH…FDQRLKQHPD (190 aa)). Positions 51, 242, and 244 each coordinate L-glutamine. Residues 194–381 (RVVAIDFGIK…VALMADRRDV (188 aa)) form the Glutamine amidotransferase type-1 domain. Cys271 acts as the Nucleophile in catalysis. 5 residues coordinate L-glutamine: Leu272, Gln275, Asn311, Gly313, and Phe314. Catalysis depends on residues His354 and Glu356.

It belongs to the CarA family. As to quaternary structure, composed of two chains; the small (or glutamine) chain promotes the hydrolysis of glutamine to ammonia, which is used by the large (or ammonia) chain to synthesize carbamoyl phosphate. Tetramer of heterodimers (alpha,beta)4.

It carries out the reaction hydrogencarbonate + L-glutamine + 2 ATP + H2O = carbamoyl phosphate + L-glutamate + 2 ADP + phosphate + 2 H(+). The catalysed reaction is L-glutamine + H2O = L-glutamate + NH4(+). It functions in the pathway amino-acid biosynthesis; L-arginine biosynthesis; carbamoyl phosphate from bicarbonate: step 1/1. It participates in pyrimidine metabolism; UMP biosynthesis via de novo pathway; (S)-dihydroorotate from bicarbonate: step 1/3. Its function is as follows. Small subunit of the glutamine-dependent carbamoyl phosphate synthetase (CPSase). CPSase catalyzes the formation of carbamoyl phosphate from the ammonia moiety of glutamine, carbonate, and phosphate donated by ATP, constituting the first step of 2 biosynthetic pathways, one leading to arginine and/or urea and the other to pyrimidine nucleotides. The small subunit (glutamine amidotransferase) binds and cleaves glutamine to supply the large subunit with the substrate ammonia. The protein is Carbamoyl phosphate synthase small chain of Parasynechococcus marenigrum (strain WH8102).